A 63-amino-acid chain; its full sequence is Large ribosomal subunit protein uL29 (63 aa).

It belongs to the universal ribosomal protein uL29 family.

This is Large ribosomal subunit protein uL29 from Aliarcobacter butzleri (strain RM4018) (Arcobacter butzleri).